Here is a 429-residue protein sequence, read N- to C-terminus: Glutamate-1-semialdehyde 2,1-aminomutase (429 aa).

K265 is subject to N6-(pyridoxal phosphate)lysine.

The protein belongs to the class-III pyridoxal-phosphate-dependent aminotransferase family. HemL subfamily. As to quaternary structure, homodimer. Pyridoxal 5'-phosphate is required as a cofactor.

It localises to the cytoplasm. It carries out the reaction (S)-4-amino-5-oxopentanoate = 5-aminolevulinate. It functions in the pathway porphyrin-containing compound metabolism; protoporphyrin-IX biosynthesis; 5-aminolevulinate from L-glutamyl-tRNA(Glu): step 2/2. This Chromohalobacter salexigens (strain ATCC BAA-138 / DSM 3043 / CIP 106854 / NCIMB 13768 / 1H11) protein is Glutamate-1-semialdehyde 2,1-aminomutase.